A 23-amino-acid polypeptide reads, in one-letter code: Paralytic peptide 2 (23 aa).

A disulfide bridge connects residues Cys7 and Cys19.

It belongs to the GBP/PSP1/paralytic peptide family. As to expression, hemolymph.

In terms of biological role, causes rapid, rigid paralysis when injected into Lepidopteran larvae. The physiological role may be to reduce hemolymph loss following injury and promote wound healing. In Spodoptera exigua (Beet armyworm), this protein is Paralytic peptide 2.